We begin with the raw amino-acid sequence, 397 residues long: Ubiquitin-like modifier-activating enzyme 5 (397 aa).

5 residues coordinate ATP: Gly-76, Asp-97, Lys-120, Asn-143, and Asn-177. Positions 219 and 222 each coordinate Zn(2+). Cys-243 functions as the Glycyl thioester intermediate in the catalytic mechanism. Zn(2+) contacts are provided by Cys-296 and Cys-301. The UFM1-interacting sequence (UIS) motif lies at 327–339; that stretch reads IVHEDNDWGIELV. The segment at 340–370 is linker; the sequence is SETTEDELKAASGPVPDLPVGITVAYTIPNK. The short motif at 382 to 397 is the UFC1-binding sequence (UFC) element; the sequence is ESEESLEDLMAKMRNL.

This sequence belongs to the ubiquitin-activating E1 family. UBA5 subfamily. As to quaternary structure, homodimer; homodimerization is required for UFM1 activation. Interacts (via UIS motif) with UFM1; binds UFM1 via a trans-binding mechanism in which UFM1 interacts with distinct sites in both subunits of the UBA5 homodimer. Interacts (via C-terminus) with UFC1.

Its subcellular location is the cytoplasm. The protein resides in the nucleus. It is found in the endoplasmic reticulum membrane. The protein localises to the golgi apparatus. Functionally, E1-like enzyme which specifically catalyzes the first step in ufmylation. Activates UFM1 by first adenylating its C-terminal glycine residue with ATP, and thereafter linking this residue to the side chain of a cysteine residue in E1, yielding a UFM1-E1 thioester and free AMP. Activates UFM1 via a trans-binding mechanism, in which UFM1 interacts with distinct sites in both subunits of the UBA5 homodimer. Trans-binding also promotes stabilization of the UBA5 homodimer, and enhances ATP-binding. Transfer of UFM1 from UBA5 to the E2-like enzyme UFC1 also takes place using a trans mechanism. Ufmylation plays a key role in various processes, such as ribosome recycling, response to DNA damage, interferon response or reticulophagy (also called ER-phagy). In Gallus gallus (Chicken), this protein is Ubiquitin-like modifier-activating enzyme 5.